Reading from the N-terminus, the 430-residue chain is Enolase (430 aa).

Gln-163 contacts (2R)-2-phosphoglycerate. Glu-205 acts as the Proton donor in catalysis. Mg(2+) contacts are provided by Asp-242, Glu-287, and Asp-314. Residues Lys-339, Arg-368, Ser-369, and Lys-390 each coordinate (2R)-2-phosphoglycerate. Catalysis depends on Lys-339, which acts as the Proton acceptor.

This sequence belongs to the enolase family. Mg(2+) is required as a cofactor.

Its subcellular location is the cytoplasm. The protein localises to the secreted. It is found in the cell surface. The catalysed reaction is (2R)-2-phosphoglycerate = phosphoenolpyruvate + H2O. It functions in the pathway carbohydrate degradation; glycolysis; pyruvate from D-glyceraldehyde 3-phosphate: step 4/5. Functionally, catalyzes the reversible conversion of 2-phosphoglycerate (2-PG) into phosphoenolpyruvate (PEP). It is essential for the degradation of carbohydrates via glycolysis. The polypeptide is Enolase (Bacillus licheniformis (strain ATCC 14580 / DSM 13 / JCM 2505 / CCUG 7422 / NBRC 12200 / NCIMB 9375 / NCTC 10341 / NRRL NRS-1264 / Gibson 46)).